The following is a 137-amino-acid chain: uncharacterized protein (137 aa).

The protein to E.coli YfdK.

This is an uncharacterized protein from Escherichia coli (strain K12).